A 425-amino-acid polypeptide reads, in one-letter code: Dual-specificity RNA methyltransferase RlmN (425 aa).

Glu-136 serves as the catalytic Proton acceptor. The Radical SAM core domain maps to Gly-142–Arg-381. A disulfide bridge connects residues Cys-149 and Cys-392. [4Fe-4S] cluster-binding residues include Cys-156, Cys-160, and Cys-163. S-adenosyl-L-methionine-binding positions include Gly-218–Glu-219, Ser-250, Ser-272–His-274, and Asn-349. Cys-392 functions as the S-methylcysteine intermediate in the catalytic mechanism.

The protein belongs to the radical SAM superfamily. RlmN family. The cofactor is [4Fe-4S] cluster.

The protein localises to the cytoplasm. It catalyses the reaction adenosine(2503) in 23S rRNA + 2 reduced [2Fe-2S]-[ferredoxin] + 2 S-adenosyl-L-methionine = 2-methyladenosine(2503) in 23S rRNA + 5'-deoxyadenosine + L-methionine + 2 oxidized [2Fe-2S]-[ferredoxin] + S-adenosyl-L-homocysteine. The enzyme catalyses adenosine(37) in tRNA + 2 reduced [2Fe-2S]-[ferredoxin] + 2 S-adenosyl-L-methionine = 2-methyladenosine(37) in tRNA + 5'-deoxyadenosine + L-methionine + 2 oxidized [2Fe-2S]-[ferredoxin] + S-adenosyl-L-homocysteine. Functionally, specifically methylates position 2 of adenine 2503 in 23S rRNA and position 2 of adenine 37 in tRNAs. m2A2503 modification seems to play a crucial role in the proofreading step occurring at the peptidyl transferase center and thus would serve to optimize ribosomal fidelity. The protein is Dual-specificity RNA methyltransferase RlmN of Methylorubrum extorquens (strain PA1) (Methylobacterium extorquens).